The following is an 87-amino-acid chain: MANIKSAKKRIKVTEKKTLRNKMIKSALKTAIKKFEVAVEANNKAEAATLYVEAARALDMSASKGVVHKNMAARKKSRLAAKLNAMA.

The protein belongs to the bacterial ribosomal protein bS20 family.

Functionally, binds directly to 16S ribosomal RNA. The polypeptide is Small ribosomal subunit protein bS20 (Clostridium perfringens (strain ATCC 13124 / DSM 756 / JCM 1290 / NCIMB 6125 / NCTC 8237 / Type A)).